Reading from the N-terminus, the 407-residue chain is Arginine biosynthesis bifunctional protein ArgJ (407 aa).

Residues Thr157, Lys183, Thr194, Glu280, Asn402, and Thr407 each contribute to the substrate site. Residue Thr194 is the Nucleophile of the active site.

The protein belongs to the ArgJ family. In terms of assembly, heterotetramer of two alpha and two beta chains.

It localises to the cytoplasm. It catalyses the reaction N(2)-acetyl-L-ornithine + L-glutamate = N-acetyl-L-glutamate + L-ornithine. It carries out the reaction L-glutamate + acetyl-CoA = N-acetyl-L-glutamate + CoA + H(+). Its pathway is amino-acid biosynthesis; L-arginine biosynthesis; L-ornithine and N-acetyl-L-glutamate from L-glutamate and N(2)-acetyl-L-ornithine (cyclic): step 1/1. It functions in the pathway amino-acid biosynthesis; L-arginine biosynthesis; N(2)-acetyl-L-ornithine from L-glutamate: step 1/4. Catalyzes two activities which are involved in the cyclic version of arginine biosynthesis: the synthesis of N-acetylglutamate from glutamate and acetyl-CoA as the acetyl donor, and of ornithine by transacetylation between N(2)-acetylornithine and glutamate. The sequence is that of Arginine biosynthesis bifunctional protein ArgJ from Bacillus cereus (strain ATCC 10987 / NRS 248).